A 407-amino-acid chain; its full sequence is Methylthioribose kinase (407 aa).

ATP is bound by residues Asn-40, Lys-57, and 111 to 113 (EDL). Asp-229 serves as a coordination point for substrate. 246–248 (DAE) provides a ligand contact to ATP. Arg-344 lines the substrate pocket.

Belongs to the methylthioribose kinase family. As to quaternary structure, homodimer.

It carries out the reaction 5-(methylsulfanyl)-D-ribose + ATP = 5-(methylsulfanyl)-alpha-D-ribose 1-phosphate + ADP + H(+). Its pathway is amino-acid biosynthesis; L-methionine biosynthesis via salvage pathway; S-methyl-5-thio-alpha-D-ribose 1-phosphate from S-methyl-5'-thioadenosine (hydrolase route): step 2/2. In terms of biological role, catalyzes the phosphorylation of methylthioribose into methylthioribose-1-phosphate. In Yersinia pseudotuberculosis serotype IB (strain PB1/+), this protein is Methylthioribose kinase.